Consider the following 189-residue polypeptide: Large ribosomal subunit protein uL13 (189 aa).

This sequence belongs to the universal ribosomal protein uL13 family.

This Salmo trutta (Brown trout) protein is Large ribosomal subunit protein uL13 (rpl13a).